A 296-amino-acid polypeptide reads, in one-letter code: Bifunctional protein FolD (296 aa).

NADP(+) contacts are provided by residues 168-170 (GRS), Thr-197, and Val-238.

The protein belongs to the tetrahydrofolate dehydrogenase/cyclohydrolase family. Homodimer.

It catalyses the reaction (6R)-5,10-methylene-5,6,7,8-tetrahydrofolate + NADP(+) = (6R)-5,10-methenyltetrahydrofolate + NADPH. The enzyme catalyses (6R)-5,10-methenyltetrahydrofolate + H2O = (6R)-10-formyltetrahydrofolate + H(+). It functions in the pathway one-carbon metabolism; tetrahydrofolate interconversion. In terms of biological role, catalyzes the oxidation of 5,10-methylenetetrahydrofolate to 5,10-methenyltetrahydrofolate and then the hydrolysis of 5,10-methenyltetrahydrofolate to 10-formyltetrahydrofolate. This chain is Bifunctional protein FolD, found in Desulfotalea psychrophila (strain LSv54 / DSM 12343).